The following is a 58-amino-acid chain: Large ribosomal subunit protein bL32 (58 aa).

Belongs to the bacterial ribosomal protein bL32 family.

In Caldicellulosiruptor saccharolyticus (strain ATCC 43494 / DSM 8903 / Tp8T 6331), this protein is Large ribosomal subunit protein bL32.